The primary structure comprises 602 residues: Probable translation initiation factor IF-2 (602 aa).

The region spanning 9–229 is the tr-type G domain; sequence LRQPIVVVLG…GLTQNYMKNK (221 aa). The tract at residues 18-25 is G1; the sequence is GHVDHGKT. Residue 18–25 participates in GTP binding; the sequence is GHVDHGKT. The G2 stretch occupies residues 43 to 47; that stretch reads EMTQE. The interval 82-85 is G3; it reads DTPG. GTP contacts are provided by residues 82–86 and 136–139; these read DTPGH and NKID. Positions 136 to 139 are G4; it reads NKID. Residues 204-206 form a G5 region; the sequence is SAK.

Belongs to the TRAFAC class translation factor GTPase superfamily. Classic translation factor GTPase family. IF-2 subfamily.

Functionally, function in general translation initiation by promoting the binding of the formylmethionine-tRNA to ribosomes. Seems to function along with eIF-2. The chain is Probable translation initiation factor IF-2 (infB) from Sulfolobus acidocaldarius (strain ATCC 33909 / DSM 639 / JCM 8929 / NBRC 15157 / NCIMB 11770).